The sequence spans 357 residues: Putative F-box/kelch-repeat protein At5g38680 (357 aa).

Positions 14–61 constitute an F-box domain; that stretch reads NSNPSLPDALIISCIARVSRLYYPILSFVSKSFRSLLASPELYKERSL. Kelch repeat units lie at residues 131-175, 177-224, 226-267, and 268-313; these read NIYN…VLDG, IYVA…SKSL, IDEK…YCEI, and ENVL…GGKK.

The sequence is that of Putative F-box/kelch-repeat protein At5g38680 from Arabidopsis thaliana (Mouse-ear cress).